Reading from the N-terminus, the 430-residue chain is Histidine--tRNA ligase (430 aa).

It belongs to the class-II aminoacyl-tRNA synthetase family. As to quaternary structure, homodimer.

It is found in the cytoplasm. The enzyme catalyses tRNA(His) + L-histidine + ATP = L-histidyl-tRNA(His) + AMP + diphosphate + H(+). This chain is Histidine--tRNA ligase, found in Lactococcus lactis subsp. lactis (strain IL1403) (Streptococcus lactis).